The chain runs to 698 residues: UvrABC system protein B (698 aa).

Residues 25–183 (NGLNSGLVHQ…TLIDLQFERN (159 aa)) form the Helicase ATP-binding domain. 38 to 45 (GATGTGKT) provides a ligand contact to ATP. Residues 91–114 (YYDAYTPEAYVPSKDLYIEKEAQI) carry the Beta-hairpin motif. Positions 428-594 (QIDDLLGEIK…GIVKAVRDLT (167 aa)) constitute a Helicase C-terminal domain. Residues 622 to 657 (FKVINALEKQMKQAAKDLEFEKAALLRDQLTEMRQT) form the UVR domain.

This sequence belongs to the UvrB family. Forms a heterotetramer with UvrA during the search for lesions. Interacts with UvrC in an incision complex.

It localises to the cytoplasm. Its function is as follows. The UvrABC repair system catalyzes the recognition and processing of DNA lesions. A damage recognition complex composed of 2 UvrA and 2 UvrB subunits scans DNA for abnormalities. Upon binding of the UvrA(2)B(2) complex to a putative damaged site, the DNA wraps around one UvrB monomer. DNA wrap is dependent on ATP binding by UvrB and probably causes local melting of the DNA helix, facilitating insertion of UvrB beta-hairpin between the DNA strands. Then UvrB probes one DNA strand for the presence of a lesion. If a lesion is found the UvrA subunits dissociate and the UvrB-DNA preincision complex is formed. This complex is subsequently bound by UvrC and the second UvrB is released. If no lesion is found, the DNA wraps around the other UvrB subunit that will check the other stand for damage. This chain is UvrABC system protein B, found in Herpetosiphon aurantiacus (strain ATCC 23779 / DSM 785 / 114-95).